The primary structure comprises 317 residues: Forkhead box protein B2 (317 aa).

Residues 13–107 (KPPYSYISLT…ENGSFLRRRK (95 aa)) constitute a DNA-binding region (fork-head).

First expressed within the dorsolateral ectoderm, except for the organizer territory. During gastrulation, expressed in 2 ectodermal stripes adjacent to the dorsal midline. With the onset of neurulation, expression shifts first to the neural plate before settling on the bottom of the neural tube, on top of the notochord. Expression is then absent until stage 35, at which stage a pair of cells in the fourth rhombomere in the dorsolateral outer area of the rhombencephalon show expression. This is followed shortly afterwards by expression in a pair of cells in rhombomere 6 at the ventricular side of the rhombencephalon.

It is found in the nucleus. Functionally, transcription factor. In Xenopus laevis (African clawed frog), this protein is Forkhead box protein B2.